A 329-amino-acid chain; its full sequence is Sialic acid-binding periplasmic protein SiaP (329 aa).

A signal peptide spans 1–23 (MMKLTKLFLATAISLGVSSAVLA). N-acetyl-beta-neuraminate is bound by residues asparagine 33, aspartate 72, glutamate 90, arginine 150, arginine 170, and asparagine 210.

Belongs to the bacterial solute-binding protein 7 family. The complex comprises the extracytoplasmic solute receptor protein SiaP, and the fused transmembrane protein SiaT.

It is found in the periplasm. In terms of biological role, part of the tripartite ATP-independent periplasmic (TRAP) transport system SiaPT involved in the uptake of sialic acid (N-acetyl-beta-neuraminate). This protein specifically binds sialic acid with high affinity. N-Acetylneuraminate (sialic acid) can then be incorporated into the lipooligosaccharides (LOS) as a terminal non-reducing sugar, protecting the bacterium from complement-mediated killing by normal human serum. In Haemophilus influenzae (strain ATCC 51907 / DSM 11121 / KW20 / Rd), this protein is Sialic acid-binding periplasmic protein SiaP (siaP).